Here is a 465-residue protein sequence, read N- to C-terminus: 3-isopropylmalate dehydratase large subunit (465 aa).

Positions 346, 406, and 409 each coordinate [4Fe-4S] cluster.

Belongs to the aconitase/IPM isomerase family. LeuC type 1 subfamily. In terms of assembly, heterodimer of LeuC and LeuD. It depends on [4Fe-4S] cluster as a cofactor.

It carries out the reaction (2R,3S)-3-isopropylmalate = (2S)-2-isopropylmalate. Its pathway is amino-acid biosynthesis; L-leucine biosynthesis; L-leucine from 3-methyl-2-oxobutanoate: step 2/4. Functionally, catalyzes the isomerization between 2-isopropylmalate and 3-isopropylmalate, via the formation of 2-isopropylmaleate. The chain is 3-isopropylmalate dehydratase large subunit from Leptospira interrogans serogroup Icterohaemorrhagiae serovar copenhageni (strain Fiocruz L1-130).